The sequence spans 125 residues: Glycine cleavage system H protein (125 aa).

Residues 23 to 103 enclose the Lipoyl-binding domain; that stretch reads TALVGITDFA…PYNAWLIKMK (81 aa). The residue at position 64 (K64) is an N6-lipoyllysine.

Belongs to the GcvH family. In terms of assembly, the glycine cleavage system is composed of four proteins: P, T, L and H. It depends on (R)-lipoate as a cofactor.

Functionally, the glycine cleavage system catalyzes the degradation of glycine. The H protein shuttles the methylamine group of glycine from the P protein to the T protein. In Chlorobium chlorochromatii (strain CaD3), this protein is Glycine cleavage system H protein.